A 152-amino-acid polypeptide reads, in one-letter code: Large ribosomal subunit protein uL30 (152 aa).

Belongs to the universal ribosomal protein uL30 family. In terms of assembly, part of the 50S ribosomal subunit.

The protein is Large ribosomal subunit protein uL30 of Methanobrevibacter smithii (strain ATCC 35061 / DSM 861 / OCM 144 / PS).